We begin with the raw amino-acid sequence, 202 residues long: FMN-dependent NADH:quinone oxidoreductase (202 aa).

FMN contacts are provided by residues serine 9, 15 to 17, 95 to 98, and 139 to 142; these read SAS, MYNF, and TSGG.

Belongs to the azoreductase type 1 family. In terms of assembly, homodimer. FMN is required as a cofactor.

The enzyme catalyses 2 a quinone + NADH + H(+) = 2 a 1,4-benzosemiquinone + NAD(+). It carries out the reaction N,N-dimethyl-1,4-phenylenediamine + anthranilate + 2 NAD(+) = 2-(4-dimethylaminophenyl)diazenylbenzoate + 2 NADH + 2 H(+). Its function is as follows. Quinone reductase that provides resistance to thiol-specific stress caused by electrophilic quinones. In terms of biological role, also exhibits azoreductase activity. Catalyzes the reductive cleavage of the azo bond in aromatic azo compounds to the corresponding amines. This Pseudomonas savastanoi pv. phaseolicola (strain 1448A / Race 6) (Pseudomonas syringae pv. phaseolicola (strain 1448A / Race 6)) protein is FMN-dependent NADH:quinone oxidoreductase.